The primary structure comprises 664 residues: Xyloglucan-specific galacturonosyltransferase 1 (664 aa).

A compositionally biased stretch (basic residues) spans 1-21 (MSLSKHLQKLVHKRESKKQPN). Positions 1–49 (MSLSKHLQKLVHKRESKKQPNKKMPVSVSKLRRPRTSKKTETGNPEKTL) are disordered. The Cytoplasmic portion of the chain corresponds to 1 to 71 (MSLSKHLQKL…IFSARSFLYR (71 aa)). A helical; Signal-anchor for type II membrane protein transmembrane segment spans residues 72-92 (VPLTILFLFLIYLWSTSTTVI). The Lumenal portion of the chain corresponds to 93–664 (SGNVVHICIS…SLFKKIAKTV (572 aa)). Asn-126, Asn-158, Asn-175, Asn-181, Asn-355, Asn-379, and Asn-522 each carry an N-linked (GlcNAc...) asparagine glycan.

Belongs to the glycosyltransferase 47 family. In terms of tissue distribution, root hair specific. Expressed in roots and young leaves.

Its subcellular location is the golgi apparatus membrane. Its function is as follows. Xyloglucan-specific galacturonosyltransferase that forms the beta-D-galactosyluronic acid-(1-&gt;2)-alpha-D-xylosyl linkage. Required for root hair development probably by providing important acidic xyloglucans. This Arabidopsis thaliana (Mouse-ear cress) protein is Xyloglucan-specific galacturonosyltransferase 1.